A 179-amino-acid chain; its full sequence is Large ribosomal subunit protein uL5 (179 aa).

This sequence belongs to the universal ribosomal protein uL5 family. As to quaternary structure, part of the 50S ribosomal subunit; part of the 5S rRNA/L5/L18/L25 subcomplex. Contacts the 5S rRNA and the P site tRNA. Forms a bridge to the 30S subunit in the 70S ribosome.

In terms of biological role, this is one of the proteins that bind and probably mediate the attachment of the 5S RNA into the large ribosomal subunit, where it forms part of the central protuberance. In the 70S ribosome it contacts protein S13 of the 30S subunit (bridge B1b), connecting the 2 subunits; this bridge is implicated in subunit movement. Contacts the P site tRNA; the 5S rRNA and some of its associated proteins might help stabilize positioning of ribosome-bound tRNAs. This is Large ribosomal subunit protein uL5 from Photobacterium profundum (strain SS9).